The primary structure comprises 278 residues: Shikimate dehydrogenase (NADP(+)) (278 aa).

Shikimate is bound by residues 18 to 20 (SRS) and threonine 65. Lysine 69 serves as the catalytic Proton acceptor. Glutamate 80 contributes to the NADP(+) binding site. 2 residues coordinate shikimate: asparagine 89 and aspartate 104. Residues 129–133 (GAGGS) and leucine 218 contribute to the NADP(+) site. Position 220 (tyrosine 220) interacts with shikimate. Glycine 241 is an NADP(+) binding site.

The protein belongs to the shikimate dehydrogenase family. Homodimer.

It catalyses the reaction shikimate + NADP(+) = 3-dehydroshikimate + NADPH + H(+). It functions in the pathway metabolic intermediate biosynthesis; chorismate biosynthesis; chorismate from D-erythrose 4-phosphate and phosphoenolpyruvate: step 4/7. Its function is as follows. Involved in the biosynthesis of the chorismate, which leads to the biosynthesis of aromatic amino acids. Catalyzes the reversible NADPH linked reduction of 3-dehydroshikimate (DHSA) to yield shikimate (SA). The chain is Shikimate dehydrogenase (NADP(+)) from Rhodopseudomonas palustris (strain TIE-1).